Here is a 234-residue protein sequence, read N- to C-terminus: Ponticulin-like protein J (234 aa).

An N-terminal signal peptide occupies residues 1–20 (MRLLNNLILMVVLFVAVSNA). N-linked (GlcNAc...) asparagine glycans are attached at residues asparagine 19, asparagine 143, asparagine 166, and asparagine 206. A disordered region spans residues 115-213 (TIKCGTLPPD…SDNETAEGNN (99 aa)). Low complexity predominate over residues 154–195 (KSTPKSPSTPKTNNSNEDSDLTTSSSDSSSSTKSSPKSKSST). Residue asparagine 212 is the site of GPI-like-anchor amidated asparagine attachment. Residue asparagine 213 is glycosylated (N-linked (GlcNAc...) asparagine). Residues 213–234 (NASSNIATFSLVIISLLVASLF) constitute a propeptide, removed in mature form.

This sequence belongs to the ponticulin family. In terms of processing, the GPI-like-anchor contains a phosphoceramide group, rather than a phosphatidyl group.

It is found in the cell membrane. Binds F-actin and nucleates actin assembly. This is Ponticulin-like protein J (ponJ) from Dictyostelium discoideum (Social amoeba).